A 147-amino-acid polypeptide reads, in one-letter code: Small ribosomal subunit protein uS12 (147 aa).

It belongs to the universal ribosomal protein uS12 family. As to quaternary structure, part of the 30S ribosomal subunit.

With S4 and S5 plays an important role in translational accuracy. Located at the interface of the 30S and 50S subunits. The protein is Small ribosomal subunit protein uS12 of Staphylothermus marinus (strain ATCC 43588 / DSM 3639 / JCM 9404 / F1).